Reading from the N-terminus, the 333-residue chain is MEDEDVPVCWICNEELGNERFRACGCTGELENVHRSCLSTWLTISRNTACQICGVVYNTRVVWRPLREMTLLPRLTYQEGLELIVFIFIMTLGAAGLAAATWVWLYIVGGHDPEIDHVAAAAYYVFFVFYQLFVVFGLGAFFHMMRHVGRAYAAVNTRVEVFPYRPRPTSPECAVEEIELQEILPRGDNQDEEGPAGAAPGDQNGPAGAAPGDQDGPADGAPVHRDSEESVDEAAGYKEAGEPTHNDGRDDNVEPTAVGCDCNNLGAERYRATYCGGYVGAQSGDGAYSVSCHNKAGPSSLVDILPQGLPGGGYGSMGVIRKRSAVSSALMFH.

Residues 1-60 (MEDEDVPVCWICNEELGNERFRACGCTGELENVHRSCLSTWLTISRNTACQICGVVYNTR) form an RING-CH-type zinc finger. The Cytoplasmic portion of the chain corresponds to 1–82 (MEDEDVPVCW…PRLTYQEGLE (82 aa)). Zn(2+)-binding residues include C9, C12, C24, C26, H34, C37, C50, and C53. A helical transmembrane segment spans residues 83–103 (LIVFIFIMTLGAAGLAAATWV). Residues 104-121 (WLYIVGGHDPEIDHVAAA) lie on the Extracellular side of the membrane. The helical transmembrane segment at 122–142 (AYYVFFVFYQLFVVFGLGAFF) threads the bilayer. Topologically, residues 143–333 (HMMRHVGRAY…SAVSSALMFH (191 aa)) are cytoplasmic. Positions 187–257 (GDNQDEEGPA…GRDDNVEPTA (71 aa)) are disordered. Over residues 195 to 221 (PAGAAPGDQNGPAGAAPGDQDGPADGA) the composition is skewed to low complexity. Positions 235 to 252 (AGYKEAGEPTHNDGRDDN) are enriched in basic and acidic residues.

In terms of assembly, binds human MHC-I and CD1D.

It localises to the host cell membrane. Its subcellular location is the host endoplasmic reticulum. The catalysed reaction is [E2 ubiquitin-conjugating enzyme]-S-ubiquitinyl-L-cysteine + [acceptor protein]-L-cysteine = [E2 ubiquitin-conjugating enzyme]-L-cysteine + [acceptor protein]-S-ubiquitinyl-L-cysteine.. The protein operates within protein modification; protein ubiquitination. In terms of biological role, membrane-bound E3 ubiquitin ligase expressed during late stages of lytic replication to mediate polyubiquitination of various host membrane proteins related to the immune response. Promotes ubiquitination and subsequent degradation of host MHC-I and CD1D molecules, DC-SIGN and DC-SIGNR, presumably to prevent lysis of infected cells by cytotoxic T-lymphocytes. Binds target molecules through transmembrane interaction. E3 ubiquitin-protein ligases accept ubiquitin from specific E2 ubiquitin-conjugating enzymes, and then transfer it to target protein. The result of this ubiquitination is the enhancement of the endocytosis of the target chain and the delivery to the lysosome, where it is proteolytically destroyed. Induces ubiquitination not only on lysines, but also on cysteine residues. In Human herpesvirus 8 type P (isolate GK18) (HHV-8), this protein is E3 ubiquitin-protein ligase MIR1 (K3).